The chain runs to 76 residues: Secreted RxLR effector protein 31 (76 aa).

Residues 1-24 (MRHCACLFHLFLIGFLCNVYFSAC) form the signal peptide. Positions 49-64 (RILRANDSEFLLTEER) match the RxLR-dEER motif. N-linked (GlcNAc...) asparagine glycosylation is present at asparagine 54.

This sequence belongs to the RxLR effector family.

The protein localises to the secreted. It localises to the host nucleus. Its subcellular location is the host cytoplasm. In terms of biological role, secreted effector that dos not suppress the host cell death induced by cell death-inducing proteins. The protein is Secreted RxLR effector protein 31 of Plasmopara viticola (Downy mildew of grapevine).